The chain runs to 297 residues: Tumor necrosis factor receptor superfamily member 27 (297 aa).

Over 1 to 138 (MDCQENEYWD…TPTVPPQEAT (138 aa)) the chain is Extracellular. TNFR-Cys repeat units follow at residues 2-41 (DCQENEYWDQWGRCVTCQRCGPGQELSKDCGYGEGGDAYC), 43-83 (ACPP…NAVC), and 85-118 (DCLPRFYRKTRIGGLQDQECIPCTKQTPTSEVQC). Cystine bridges form between Cys-3/Cys-15, Cys-18/Cys-31, Cys-21/Cys-41, Cys-44/Cys-58, Cys-61/Cys-75, Cys-64/Cys-83, Cys-86/Cys-104, and Cys-107/Cys-118. N-linked (GlcNAc...) asparagine glycosylation is present at Asn-74. The helical; Signal-anchor for type III membrane protein transmembrane segment at 139-159 (LVALVSSLLVVFTLAFLGLFF) threads the bilayer. The Cytoplasmic portion of the chain corresponds to 160-297 (LYCKQFFNRH…LNVPFEVPSP (138 aa)). Residues 272–281 (ETLGGNTVES) are compositionally biased toward polar residues. A disordered region spans residues 272–297 (ETLGGNTVESTGDRLELNVPFEVPSP).

As to quaternary structure, associates with TRAF1, TRAF3 and TRAF6.

Its subcellular location is the membrane. Its function is as follows. Receptor for EDA isoform A2, but not for EDA isoform A1. Mediates the activation of the NF-kappa-B and JNK pathways. Activation seems to be mediated by binding to TRAF3 and TRAF6. The chain is Tumor necrosis factor receptor superfamily member 27 (EDA2R) from Homo sapiens (Human).